A 61-amino-acid polypeptide reads, in one-letter code: DNA-directed RNA polymerase subunit Rpo6 (61 aa).

Belongs to the archaeal Rpo6/eukaryotic RPB6 RNA polymerase subunit family. In terms of assembly, part of the RNA polymerase complex.

It is found in the cytoplasm. The enzyme catalyses RNA(n) + a ribonucleoside 5'-triphosphate = RNA(n+1) + diphosphate. In terms of biological role, DNA-dependent RNA polymerase (RNAP) catalyzes the transcription of DNA into RNA using the four ribonucleoside triphosphates as substrates. In Methanothermobacter thermautotrophicus (strain ATCC 29096 / DSM 1053 / JCM 10044 / NBRC 100330 / Delta H) (Methanobacterium thermoautotrophicum), this protein is DNA-directed RNA polymerase subunit Rpo6.